The primary structure comprises 377 residues: Queuine tRNA-ribosyltransferase (377 aa).

Aspartate 93 acts as the Proton acceptor in catalysis. Substrate contacts are provided by residues 93 to 97 (DSGGF), aspartate 147, glutamine 190, and glycine 216. Positions 247 to 253 (GVGTPDD) are RNA binding. The active-site Nucleophile is aspartate 266. An RNA binding; important for wobble base 34 recognition region spans residues 271 to 275 (TRAGR). Zn(2+)-binding residues include cysteine 304, cysteine 306, cysteine 309, and histidine 335.

Belongs to the queuine tRNA-ribosyltransferase family. Homodimer. Within each dimer, one monomer is responsible for RNA recognition and catalysis, while the other monomer binds to the replacement base PreQ1. It depends on Zn(2+) as a cofactor.

It carries out the reaction 7-aminomethyl-7-carbaguanine + guanosine(34) in tRNA = 7-aminomethyl-7-carbaguanosine(34) in tRNA + guanine. It functions in the pathway tRNA modification; tRNA-queuosine biosynthesis. Functionally, catalyzes the base-exchange of a guanine (G) residue with the queuine precursor 7-aminomethyl-7-deazaguanine (PreQ1) at position 34 (anticodon wobble position) in tRNAs with GU(N) anticodons (tRNA-Asp, -Asn, -His and -Tyr). Catalysis occurs through a double-displacement mechanism. The nucleophile active site attacks the C1' of nucleotide 34 to detach the guanine base from the RNA, forming a covalent enzyme-RNA intermediate. The proton acceptor active site deprotonates the incoming PreQ1, allowing a nucleophilic attack on the C1' of the ribose to form the product. After dissociation, two additional enzymatic reactions on the tRNA convert PreQ1 to queuine (Q), resulting in the hypermodified nucleoside queuosine (7-(((4,5-cis-dihydroxy-2-cyclopenten-1-yl)amino)methyl)-7-deazaguanosine). The sequence is that of Queuine tRNA-ribosyltransferase from Granulibacter bethesdensis (strain ATCC BAA-1260 / CGDNIH1).